The sequence spans 558 residues: Urocanate hydratase (558 aa).

Residues 54-55 (GG), Gln132, 178-180 (GMG), Glu198, 244-245 (NA), 265-269 (QTSAH), 275-276 (YL), and Tyr324 each bind NAD(+). The active site involves Cys412. Gly494 contacts NAD(+).

It belongs to the urocanase family. Requires NAD(+) as cofactor.

It is found in the cytoplasm. The catalysed reaction is 4-imidazolone-5-propanoate = trans-urocanate + H2O. The protein operates within amino-acid degradation; L-histidine degradation into L-glutamate; N-formimidoyl-L-glutamate from L-histidine: step 2/3. In terms of biological role, catalyzes the conversion of urocanate to 4-imidazolone-5-propionate. The sequence is that of Urocanate hydratase from Acinetobacter baumannii (strain SDF).